A 471-amino-acid polypeptide reads, in one-letter code: Putative multidrug resistance protein MdtD (471 aa).

Helical transmembrane passes span 12–32, 49–69, 77–97, 102–124, 138–158, 165–185, 197–217, 222–242, 263–283, 286–306, 342–362, 396–416, and 431–451; these read LWIV…VNTA, MVVV…GWLA, IFFT…WSST, VLAR…LTVM, FVTL…GILV, WIFL…LMLM, LSGF…LDGS, LSPL…ALYL, FSLG…LPFM, VFLQ…MIPM, LLFM…VLFL, MIMQ…LGMF, and VFMY…LIFA.

This sequence belongs to the major facilitator superfamily. TCR/Tet family.

The protein localises to the cell inner membrane. The chain is Putative multidrug resistance protein MdtD from Citrobacter koseri (strain ATCC BAA-895 / CDC 4225-83 / SGSC4696).